The following is a 175-amino-acid chain: MFTFLKLIAGFRVTFSAMFKKPVTEGYPEKPGPVAPRYHGRHQLNRWPDGLEKCIGCELCAWACPADAIFVESADNTEAERFSPGERYGRVYQINYLRCIGCGFCIEACPTRALTMINDYEMADDNRADLIYGKDQLLAPLQPGMAAPPHPMAPGSTERDYYLLDNIAAANREAR.

2 4Fe-4S ferredoxin-type domains span residues 44-74 (LNRWPDGLEKCIGCELCAWACPADAIFVESA) and 90-119 (RVYQINYLRCIGCGFCIEACPTRALTMIND). [4Fe-4S] cluster-binding residues include Cys-54, Cys-57, Cys-60, Cys-64, Cys-99, Cys-102, Cys-105, and Cys-109.

Belongs to the complex I 23 kDa subunit family. In terms of assembly, NDH-1 is composed of 14 different subunits. Subunits NuoA, H, J, K, L, M, N constitute the membrane sector of the complex. Requires [4Fe-4S] cluster as cofactor.

It localises to the cell membrane. The enzyme catalyses a quinone + NADH + 5 H(+)(in) = a quinol + NAD(+) + 4 H(+)(out). In terms of biological role, NDH-1 shuttles electrons from NADH, via FMN and iron-sulfur (Fe-S) centers, to quinones in the respiratory chain. The immediate electron acceptor for the enzyme in this species is believed to be menaquinone. Couples the redox reaction to proton translocation (for every two electrons transferred, four hydrogen ions are translocated across the cytoplasmic membrane), and thus conserves the redox energy in a proton gradient. This Mycolicibacterium paratuberculosis (strain ATCC BAA-968 / K-10) (Mycobacterium paratuberculosis) protein is NADH-quinone oxidoreductase subunit I 1.